A 973-amino-acid chain; its full sequence is E3 ubiquitin-protein ligase BRE1A (973 aa).

Positions 1–37 are disordered; that stretch reads MSGIGNKRAAGEPGTSMPPEKKTAVEDSGTTVETIKL. Lysine 21 carries the post-translational modification N6-acetyllysine. Serine 41 bears the Phosphoserine mark. Residues 43–90 adopt a coiled-coil conformation; it reads TEELDIRTLQSKNRKLAEMLDQRQAIEDELREHIEKLERRQATDDASL. The tract at residues 128 to 153 is disordered; the sequence is VVPEPEPDSDSNQERKDDRERGDGQE. Phosphoserine occurs at positions 136 and 138. The segment covering 139 to 151 has biased composition (basic and acidic residues); the sequence is NQERKDDRERGDG. Coiled-coil stretches lie at residues 168-378 and 429-896; these read EEME…VKET and SLHK…TTKK. N6-acetyllysine is present on residues lysine 348 and lysine 510. A disordered region spans residues 507-620; sequence DLNKTRLRSG…GKHDDGRKKE (114 aa). Serine 522 carries the post-translational modification Phosphoserine. Composition is skewed to basic and acidic residues over residues 527–544 and 553–620; these read EDPK…EDLA and SQED…RKKE. Serine 560 is modified (phosphoserine). An RING-type zinc finger spans residues 920 to 959; it reads CPCCNMRKKDAVLTKCFHVFCFECVKTRYDTRQRKCPKCN.

The protein belongs to the BRE1 family. As to quaternary structure, component of the RNF20/40 complex (also known as BRE1 complex) probably composed of 2 copies of RNF20/BRE1A and 2 copies of RNF40/BRE1B. Interacts with UBE2E1/UBCH6. Interacts with p53/TP53 and WAC. Interacts with PAF1; the interaction mediates the association of the PAF1 and RNF20/40 complexes which is a prerequsite for recruitment of UBE2A/B. Interacts with PA2G4. Interacts with FBXL19.

The protein resides in the nucleus. The enzyme catalyses S-ubiquitinyl-[E2 ubiquitin-conjugating enzyme]-L-cysteine + [acceptor protein]-L-lysine = [E2 ubiquitin-conjugating enzyme]-L-cysteine + N(6)-ubiquitinyl-[acceptor protein]-L-lysine.. Its pathway is protein modification; protein ubiquitination. In terms of biological role, component of the RNF20/40 E3 ubiquitin-protein ligase complex that mediates monoubiquitination of 'Lys-120' of histone H2B (H2BK120ub1). H2BK120ub1 gives a specific tag for epigenetic transcriptional activation and is also prerequisite for histone H3 'Lys-4' and 'Lys-79' methylation (H3K4me and H3K79me, respectively). It thereby plays a central role in histone code and gene regulation. The RNF20/40 complex forms a H2B ubiquitin ligase complex in cooperation with the E2 enzyme UBE2A or UBE2B; reports about the cooperation with UBE2E1/UBCH are contradictory. Required for transcriptional activation of Hox genes. Recruited to the MDM2 promoter, probably by being recruited by p53/TP53, and thereby acts as a transcriptional coactivator. Mediates the polyubiquitination of PA2G4 leading to its proteasome-mediated degradation. In Mus musculus (Mouse), this protein is E3 ubiquitin-protein ligase BRE1A (Rnf20).